A 94-amino-acid chain; its full sequence is Large ribosomal subunit protein uL23c (94 aa).

The protein belongs to the universal ribosomal protein uL23 family. As to quaternary structure, part of the 50S ribosomal subunit.

Its subcellular location is the plastid. The protein resides in the chloroplast. Binds to 23S rRNA. In Tupiella akineta (Green alga), this protein is Large ribosomal subunit protein uL23c (rpl23).